Here is a 291-residue protein sequence, read N- to C-terminus: MTDSGLMMPAEIAGILTTAITSWWDDVNESTQWQDGIFFALCGAYALVSAVALVQLIRIQMRVPEYGWTTQKVFHLMNFVVNGVRAVLFGFHMQVFLVHPKALCWVLLDLPGLLFFSAYTLLVLFWAEIYHQARSLPTDKLRITYISVNVAVYLAQIGIWAYIWVHDNSTVELVGKIFIAVVSFIAALGFLLYGGRLFFMLRRFPIESKGRRKKLHEVGSVTAICFTCFLIRCVVVAVSAFDKDLTLDVLDHPVLNLIYYMVVEVLPSALVLFILRKLPPKRVSAQYHPIQ.

The Cytoplasmic portion of the chain corresponds to 1 to 3; sequence MTD. The helical transmembrane segment at 4 to 24 threads the bilayer; sequence SGLMMPAEIAGILTTAITSWW. Residues 25 to 36 lie on the Extracellular side of the membrane; it reads DDVNESTQWQDG. An N-linked (GlcNAc...) asparagine glycan is attached at Asn28. Residues 37–57 traverse the membrane as a helical segment; it reads IFFALCGAYALVSAVALVQLI. Topologically, residues 58–78 are cytoplasmic; the sequence is RIQMRVPEYGWTTQKVFHLMN. Residues 79–99 form a helical membrane-spanning segment; that stretch reads FVVNGVRAVLFGFHMQVFLVH. The Extracellular portion of the chain corresponds to 100–104; that stretch reads PKALC. The helical transmembrane segment at 105–125 threads the bilayer; that stretch reads WVLLDLPGLLFFSAYTLLVLF. Residues 126-144 are Cytoplasmic-facing; sequence WAEIYHQARSLPTDKLRIT. Residues 145–165 form a helical membrane-spanning segment; sequence YISVNVAVYLAQIGIWAYIWV. Residues 166–172 lie on the Extracellular side of the membrane; sequence HDNSTVE. Residue Asn168 is glycosylated (N-linked (GlcNAc...) asparagine). Residues 173–193 form a helical membrane-spanning segment; the sequence is LVGKIFIAVVSFIAALGFLLY. The Cytoplasmic portion of the chain corresponds to 194–220; sequence GGRLFFMLRRFPIESKGRRKKLHEVGS. Residues 221 to 241 form a helical membrane-spanning segment; that stretch reads VTAICFTCFLIRCVVVAVSAF. Topologically, residues 242-253 are extracellular; that stretch reads DKDLTLDVLDHP. Residues 254 to 274 form a helical membrane-spanning segment; that stretch reads VLNLIYYMVVEVLPSALVLFI. Residues 275–291 are Cytoplasmic-facing; that stretch reads LRKLPPKRVSAQYHPIQ.

Belongs to the plant tobamovirus multiplication TOM1 protein family. In terms of assembly, constituent of tobamovirus replication complex. Interacts with TOM2A and with the helicase domain of tobamovirus-encoded replication proteins.

The protein localises to the vacuole membrane. Necessary for the efficient intracellular multiplication of tobamoviruses, probably being a membrane anchor promoting the formation of the replication complex. The sequence is that of Tobamovirus multiplication protein 1 (TOM1) from Arabidopsis thaliana (Mouse-ear cress).